Reading from the N-terminus, the 260-residue chain is uncharacterized protein (260 aa).

One can recognise a Radical SAM core domain in the interval 6 to 239; it reads AGVRSGVVVS…VAVAETYLPN (234 aa).

This is an uncharacterized protein from Sinorhizobium fredii (strain NBRC 101917 / NGR234).